A 488-amino-acid polypeptide reads, in one-letter code: Probable multidrug resistance protein NorM (488 aa).

The next 12 membrane-spanning stretches (helical) occupy residues 11 to 31, 55 to 75, 97 to 117, 127 to 147, 159 to 179, 190 to 210, 247 to 267, 271 to 291, 317 to 337, 355 to 375, 393 to 413, and 421 to 441; these read AILR…AMVF, YAFV…LVAI, AALA…LLVF, AMQF…FMVL, PVMA…YSFI, LAGI…LLAL, GTYA…GIIG, LAAH…PVGL, VGIG…WWMP, VAAM…FDGT, FLVG…LLAF, and GVWW…TLAF.

This sequence belongs to the multi antimicrobial extrusion (MATE) (TC 2.A.66.1) family.

It localises to the cell inner membrane. Its function is as follows. Multidrug efflux pump. The sequence is that of Probable multidrug resistance protein NorM (norM) from Pseudomonas aeruginosa (strain ATCC 15692 / DSM 22644 / CIP 104116 / JCM 14847 / LMG 12228 / 1C / PRS 101 / PAO1).